A 227-amino-acid chain; its full sequence is Probable FKBP-type 25 kDa peptidyl-prolyl cis-trans isomerase (227 aa).

In terms of domain architecture, PPIase FKBP-type spans 144-227 (ATQVHVRYRG…VFEIDLLGFR (84 aa)).

The protein belongs to the FKBP-type PPIase family.

It catalyses the reaction [protein]-peptidylproline (omega=180) = [protein]-peptidylproline (omega=0). PPIases accelerate the folding of proteins. The polypeptide is Probable FKBP-type 25 kDa peptidyl-prolyl cis-trans isomerase (fkl) (Pseudomonas aeruginosa (strain ATCC 15692 / DSM 22644 / CIP 104116 / JCM 14847 / LMG 12228 / 1C / PRS 101 / PAO1)).